Reading from the N-terminus, the 222-residue chain is Small ribosomal subunit protein uS5 (222 aa).

The segment at 1-41 is disordered; that stretch reads MAEQAGAGSAQDNRGGGRDDRGGRGRRDDRGGRGGRDDREK. Over residues 15-41 the composition is skewed to basic and acidic residues; sequence GGGRDDRGGRGRRDDRGGRGGRDDREK. The region spanning 44–107 is the S5 DRBM domain; the sequence is YLERVVTINR…EEARKNFFRV (64 aa).

This sequence belongs to the universal ribosomal protein uS5 family. As to quaternary structure, part of the 30S ribosomal subunit. Contacts proteins S4 and S8.

With S4 and S12 plays an important role in translational accuracy. In terms of biological role, located at the back of the 30S subunit body where it stabilizes the conformation of the head with respect to the body. This Mycolicibacterium gilvum (strain PYR-GCK) (Mycobacterium gilvum (strain PYR-GCK)) protein is Small ribosomal subunit protein uS5.